A 159-amino-acid polypeptide reads, in one-letter code: Ribosome maturation factor RimP (159 aa).

This sequence belongs to the RimP family.

It localises to the cytoplasm. Functionally, required for maturation of 30S ribosomal subunits. In Geotalea uraniireducens (strain Rf4) (Geobacter uraniireducens), this protein is Ribosome maturation factor RimP.